The following is a 91-amino-acid chain: Probable Fe(2+)-trafficking protein (91 aa).

The protein belongs to the Fe(2+)-trafficking protein family.

Its function is as follows. Could be a mediator in iron transactions between iron acquisition and iron-requiring processes, such as synthesis and/or repair of Fe-S clusters in biosynthetic enzymes. In Burkholderia cenocepacia (strain ATCC BAA-245 / DSM 16553 / LMG 16656 / NCTC 13227 / J2315 / CF5610) (Burkholderia cepacia (strain J2315)), this protein is Probable Fe(2+)-trafficking protein.